A 227-amino-acid polypeptide reads, in one-letter code: Cytochrome c oxidase subunit 2 (227 aa).

The Mitochondrial intermembrane segment spans residues 1–14; it reads MAYPFQLGFQDATS. Residues 15–45 traverse the membrane as a helical segment; sequence PIMEELLHFHDHTLMIVFLISSLVLYIISSM. At 46–59 the chain is on the mitochondrial matrix side; the sequence is LTTKLTHTSTMDAQ. The helical transmembrane segment at 60-87 threads the bilayer; the sequence is EVETIWTILPAIILILIALPSLRILYMM. Topologically, residues 88–227 are mitochondrial intermembrane; that stretch reads DEINNPSLTV…YFEEWSASML (140 aa). 6 residues coordinate Cu cation: His161, Cys196, Glu198, Cys200, His204, and Met207. Residue Glu198 participates in Mg(2+) binding.

The protein belongs to the cytochrome c oxidase subunit 2 family. Component of the cytochrome c oxidase (complex IV, CIV), a multisubunit enzyme composed of 14 subunits. The complex is composed of a catalytic core of 3 subunits MT-CO1, MT-CO2 and MT-CO3, encoded in the mitochondrial DNA, and 11 supernumerary subunits COX4I, COX5A, COX5B, COX6A, COX6B, COX6C, COX7A, COX7B, COX7C, COX8 and NDUFA4, which are encoded in the nuclear genome. The complex exists as a monomer or a dimer and forms supercomplexes (SCs) in the inner mitochondrial membrane with NADH-ubiquinone oxidoreductase (complex I, CI) and ubiquinol-cytochrome c oxidoreductase (cytochrome b-c1 complex, complex III, CIII), resulting in different assemblies (supercomplex SCI(1)III(2)IV(1) and megacomplex MCI(2)III(2)IV(2)). Found in a complex with TMEM177, COA6, COX18, COX20, SCO1 and SCO2. Interacts with TMEM177 in a COX20-dependent manner. Interacts with COX20. Interacts with COX16. Cu cation is required as a cofactor.

It is found in the mitochondrion inner membrane. It catalyses the reaction 4 Fe(II)-[cytochrome c] + O2 + 8 H(+)(in) = 4 Fe(III)-[cytochrome c] + 2 H2O + 4 H(+)(out). Its function is as follows. Component of the cytochrome c oxidase, the last enzyme in the mitochondrial electron transport chain which drives oxidative phosphorylation. The respiratory chain contains 3 multisubunit complexes succinate dehydrogenase (complex II, CII), ubiquinol-cytochrome c oxidoreductase (cytochrome b-c1 complex, complex III, CIII) and cytochrome c oxidase (complex IV, CIV), that cooperate to transfer electrons derived from NADH and succinate to molecular oxygen, creating an electrochemical gradient over the inner membrane that drives transmembrane transport and the ATP synthase. Cytochrome c oxidase is the component of the respiratory chain that catalyzes the reduction of oxygen to water. Electrons originating from reduced cytochrome c in the intermembrane space (IMS) are transferred via the dinuclear copper A center (CU(A)) of subunit 2 and heme A of subunit 1 to the active site in subunit 1, a binuclear center (BNC) formed by heme A3 and copper B (CU(B)). The BNC reduces molecular oxygen to 2 water molecules using 4 electrons from cytochrome c in the IMS and 4 protons from the mitochondrial matrix. The sequence is that of Cytochrome c oxidase subunit 2 (MT-CO2) from Equus asinus (Donkey).